The primary structure comprises 256 residues: Imidazole glycerol phosphate synthase subunit HisF (256 aa).

Active-site residues include aspartate 13 and aspartate 132.

This sequence belongs to the HisA/HisF family. As to quaternary structure, heterodimer of HisH and HisF.

The protein localises to the cytoplasm. The catalysed reaction is 5-[(5-phospho-1-deoxy-D-ribulos-1-ylimino)methylamino]-1-(5-phospho-beta-D-ribosyl)imidazole-4-carboxamide + L-glutamine = D-erythro-1-(imidazol-4-yl)glycerol 3-phosphate + 5-amino-1-(5-phospho-beta-D-ribosyl)imidazole-4-carboxamide + L-glutamate + H(+). It participates in amino-acid biosynthesis; L-histidine biosynthesis; L-histidine from 5-phospho-alpha-D-ribose 1-diphosphate: step 5/9. IGPS catalyzes the conversion of PRFAR and glutamine to IGP, AICAR and glutamate. The HisF subunit catalyzes the cyclization activity that produces IGP and AICAR from PRFAR using the ammonia provided by the HisH subunit. In Leptospira borgpetersenii serovar Hardjo-bovis (strain JB197), this protein is Imidazole glycerol phosphate synthase subunit HisF.